The sequence spans 456 residues: Bifunctional protein GlmU (456 aa).

Residues 1 to 229 are pyrophosphorylase; sequence MTKKALSAVI…VMEVEGANNR (229 aa). UDP-N-acetyl-alpha-D-glucosamine-binding positions include 11-14, K25, Q76, 81-82, 103-105, G140, E154, N169, and N227; these read LAAG, GT, and YGD. D105 contributes to the Mg(2+) binding site. N227 is a Mg(2+) binding site. Residues 230-250 are linker; sequence LQLAALERYFQNKQASKLLLE. Positions 251–456 are N-acetyltransferase; it reads GVMIYDPARF…QGWQRPIKKK (206 aa). UDP-N-acetyl-alpha-D-glucosamine-binding residues include R333 and K351. The active-site Proton acceptor is the H363. Residues Y366 and N377 each contribute to the UDP-N-acetyl-alpha-D-glucosamine site. Acetyl-CoA is bound by residues A380, 386 to 387, S405, A423, and R440; that span reads NY.

This sequence in the N-terminal section; belongs to the N-acetylglucosamine-1-phosphate uridyltransferase family. In the C-terminal section; belongs to the transferase hexapeptide repeat family. As to quaternary structure, homotrimer. The cofactor is Mg(2+).

It is found in the cytoplasm. It carries out the reaction alpha-D-glucosamine 1-phosphate + acetyl-CoA = N-acetyl-alpha-D-glucosamine 1-phosphate + CoA + H(+). It catalyses the reaction N-acetyl-alpha-D-glucosamine 1-phosphate + UTP + H(+) = UDP-N-acetyl-alpha-D-glucosamine + diphosphate. It participates in nucleotide-sugar biosynthesis; UDP-N-acetyl-alpha-D-glucosamine biosynthesis; N-acetyl-alpha-D-glucosamine 1-phosphate from alpha-D-glucosamine 6-phosphate (route II): step 2/2. It functions in the pathway nucleotide-sugar biosynthesis; UDP-N-acetyl-alpha-D-glucosamine biosynthesis; UDP-N-acetyl-alpha-D-glucosamine from N-acetyl-alpha-D-glucosamine 1-phosphate: step 1/1. Its pathway is bacterial outer membrane biogenesis; LPS lipid A biosynthesis. In terms of biological role, catalyzes the last two sequential reactions in the de novo biosynthetic pathway for UDP-N-acetylglucosamine (UDP-GlcNAc). The C-terminal domain catalyzes the transfer of acetyl group from acetyl coenzyme A to glucosamine-1-phosphate (GlcN-1-P) to produce N-acetylglucosamine-1-phosphate (GlcNAc-1-P), which is converted into UDP-GlcNAc by the transfer of uridine 5-monophosphate (from uridine 5-triphosphate), a reaction catalyzed by the N-terminal domain. This is Bifunctional protein GlmU from Haemophilus influenzae (strain ATCC 51907 / DSM 11121 / KW20 / Rd).